Here is a 230-residue protein sequence, read N- to C-terminus: Heptaprenylglyceryl phosphate synthase (230 aa).

Lysine 12 contacts sn-glycerol 1-phosphate. Aspartate 14 and threonine 40 together coordinate Mg(2+). Residues 159-164, glycine 189, and 209-210 each bind sn-glycerol 1-phosphate; these read YIEYSG and GD.

It belongs to the GGGP/HepGP synthase family. Group I subfamily. Homodimer. Mg(2+) is required as a cofactor.

The catalysed reaction is sn-glycerol 1-phosphate + all-trans-heptaprenyl diphosphate = 3-heptaprenyl-sn-glycero-1-phosphate + diphosphate. It functions in the pathway membrane lipid metabolism; glycerophospholipid metabolism. Its function is as follows. Prenyltransferase that catalyzes in vivo the transfer of the heptaprenyl moiety of heptaprenyl pyrophosphate (HepPP; 35 carbon atoms) to the C3 hydroxyl of sn-glycerol-1-phosphate (G1P), producing heptaprenylglyceryl phosphate (HepGP). This reaction is an ether-bond-formation step in the biosynthesis of archaea-type G1P-based membrane lipids found in Bacillales. In Staphylococcus aureus (strain MRSA252), this protein is Heptaprenylglyceryl phosphate synthase.